A 248-amino-acid polypeptide reads, in one-letter code: Probable transcriptional regulatory protein RPA1097 (248 aa).

A disordered region spans residues 1–21 (MAGHSQFKNIMHRKGRQDAQR).

Belongs to the TACO1 family.

Its subcellular location is the cytoplasm. The protein is Probable transcriptional regulatory protein RPA1097 of Rhodopseudomonas palustris (strain ATCC BAA-98 / CGA009).